The primary structure comprises 327 residues: Phenylalanine--tRNA ligase alpha subunit (327 aa).

Glu252 contacts Mg(2+).

It belongs to the class-II aminoacyl-tRNA synthetase family. Phe-tRNA synthetase alpha subunit type 1 subfamily. As to quaternary structure, tetramer of two alpha and two beta subunits. Requires Mg(2+) as cofactor.

It localises to the cytoplasm. The enzyme catalyses tRNA(Phe) + L-phenylalanine + ATP = L-phenylalanyl-tRNA(Phe) + AMP + diphosphate + H(+). This chain is Phenylalanine--tRNA ligase alpha subunit, found in Yersinia pestis bv. Antiqua (strain Angola).